We begin with the raw amino-acid sequence, 814 residues long: G-type lectin S-receptor-like serine/threonine-protein kinase At1g61370 (814 aa).

The N-terminal stretch at 1 to 25 (MGKIGIVFFASLLFLLIIFPSCAFA) is a signal peptide. In terms of domain architecture, Bulb-type lectin spans 26–145 (AITRASPLSI…VSERNLWESF (120 aa)). At 26–433 (AITRASPLSI…SELAGSNRVK (408 aa)) the chain is on the extracellular side. Residues Asn-43, Asn-54, Asn-89, Asn-95, Asn-253, and Asn-271 are each glycosylated (N-linked (GlcNAc...) asparagine). The EGF-like domain occupies 282 to 318 (PVSSCDVYNTCGPFGLCIRSNPPKCECLKGFVPKSDE). 2 disulfide bridges follow: Cys-286-Cys-298 and Cys-292-Cys-306. Asn-324, Asn-334, Asn-340, and Asn-383 each carry an N-linked (GlcNAc...) asparagine glycan. The region spanning 337 to 423 (CDVNSSATAQ…GETLSIRLAS (87 aa)) is the PAN domain. 2 disulfide bridges follow: Cys-376-Cys-397 and Cys-380-Cys-386. A helical transmembrane segment spans residues 434–454 (IIVASIVSISVFMILVFASYW). Residues 455 to 814 (YWRYKAKQND…NITQTAIVGR (360 aa)) are Cytoplasmic-facing. Residues 501–786 (FSMENKLGQG…DLPKPKQPVF (286 aa)) enclose the Protein kinase domain. ATP-binding positions include 507-515 (LGQGGFGPV) and Lys-529. A phosphoserine mark is found at Ser-535 and Ser-550. Residues 590–607 (TKKLELDWPKRFEIIQGI) form a caM-binding region. Catalysis depends on Asp-626, which acts as the Proton acceptor. A phosphoserine mark is found at Ser-630 and Ser-643. Thr-660 carries the phosphothreonine modification. 4 positions are modified to phosphoserine: Ser-703, Ser-704, Ser-797, and Ser-802. Position 809 is a phosphothreonine (Thr-809).

It belongs to the protein kinase superfamily. Ser/Thr protein kinase family.

It localises to the cell membrane. The catalysed reaction is L-seryl-[protein] + ATP = O-phospho-L-seryl-[protein] + ADP + H(+). It carries out the reaction L-threonyl-[protein] + ATP = O-phospho-L-threonyl-[protein] + ADP + H(+). The sequence is that of G-type lectin S-receptor-like serine/threonine-protein kinase At1g61370 from Arabidopsis thaliana (Mouse-ear cress).